We begin with the raw amino-acid sequence, 256 residues long: Pimeloyl-[acyl-carrier protein] methyl ester esterase (256 aa).

Residues 15 to 242 (HLVLLHGWGL…AAHAPFISHP (228 aa)) enclose the AB hydrolase-1 domain. Substrate contacts are provided by residues Trp-22, 82–83 (SL), and 143–147 (FLALQ). The active-site Nucleophile is the Ser-82. Catalysis depends on residues Asp-207 and His-235. His-235 is a substrate binding site.

This sequence belongs to the AB hydrolase superfamily. Carboxylesterase BioH family. As to quaternary structure, monomer.

The protein localises to the cytoplasm. It carries out the reaction 6-carboxyhexanoyl-[ACP] methyl ester + H2O = 6-carboxyhexanoyl-[ACP] + methanol + H(+). Its pathway is cofactor biosynthesis; biotin biosynthesis. Functionally, the physiological role of BioH is to remove the methyl group introduced by BioC when the pimeloyl moiety is complete. It allows to synthesize pimeloyl-ACP via the fatty acid synthetic pathway through the hydrolysis of the ester bonds of pimeloyl-ACP esters. This Escherichia coli O6:K15:H31 (strain 536 / UPEC) protein is Pimeloyl-[acyl-carrier protein] methyl ester esterase.